The chain runs to 735 residues: Disintegrin and metalloproteinase domain-containing protein 2 (735 aa).

The first 15 residues, 1-15, serve as a signal peptide directing secretion; the sequence is MLCLLLLLCGLASLG. Residues 16–176 constitute a propeptide that is removed on maturation; sequence GPLKKYVENS…KIKSIKSSVR (161 aa). Over 16 to 680 the chain is Extracellular; the sequence is GPLKKYVENS…EGAYHTKSRK (665 aa). N-linked (GlcNAc...) asparagine glycans are attached at residues asparagine 55, asparagine 220, and asparagine 288. The Peptidase M12B domain maps to 178-375; sequence HYIEMHIIVE…QVSQCLQNQP (198 aa). 4 disulfide bridges follow: cysteine 287-cysteine 370, cysteine 329-cysteine 354, cysteine 331-cysteine 336, and cysteine 442-cysteine 455. Asparagine 353 is a glycosylation site (N-linked (GlcNAc...) asparagine). The region spanning 384 to 470 is the Disintegrin domain; it reads NPVCGNNRVE…ACQEDLYVIN (87 aa). N-linked (GlcNAc...) asparagine glycosylation is found at asparagine 456 and asparagine 564. Positions 610-643 constitute an EGF-like domain; sequence LGYDCTPATCSDHGVCNNKRHCHCNPTYVPPNCE. 3 disulfide bridges follow: cysteine 614–cysteine 625, cysteine 619–cysteine 631, and cysteine 633–cysteine 642. The chain crosses the membrane as a helical span at residues 681-701; it reads WPFFLIIPFFVIFSVLVATVV. Residues 702-735 are Cytoplasmic-facing; sequence KVYYQKKKWKTEDYANDENIESESEPKSSKVSSK. A disordered region spans residues 716 to 735; sequence ANDENIESESEPKSSKVSSK. Serine 723 is subject to Phosphoserine.

Heterodimer with ADAM1/fertilin subunit alpha. Post-translationally, the signal and the metalloprotease domain are cleaved during the epididymal maturation of the spermatozoa. In terms of tissue distribution, expressed specifically in testis.

It is found in the membrane. In terms of biological role, sperm surface membrane protein that may be involved in sperm-egg plasma membrane adhesion and fusion during fertilization. Could have a direct role in sperm-zona binding or migration of sperm from the uterus into the oviduct. Interactions with egg membrane could be mediated via binding between its disintegrin-like domain to one or more integrins receptors on the egg. This is a non catalytic metalloprotease-like protein. In Cavia porcellus (Guinea pig), this protein is Disintegrin and metalloproteinase domain-containing protein 2 (ADAM2).